The following is a 109-amino-acid chain: Iron-sulfur cluster assembly protein CyaY (109 aa).

Belongs to the frataxin family.

Functionally, involved in iron-sulfur (Fe-S) cluster assembly. May act as a regulator of Fe-S biogenesis. This chain is Iron-sulfur cluster assembly protein CyaY, found in Bordetella bronchiseptica (strain ATCC BAA-588 / NCTC 13252 / RB50) (Alcaligenes bronchisepticus).